The following is a 438-amino-acid chain: MLNTFSSVRQYLKFDLTRVVIDNIVFKLHYRWTFVILLVATLLITSRQYIGEHIQCLSDGVVSPVINTFCFFTPTFTVVRDQNQTAYRPGSEPPGIGAFDPEKDTIKRHAYYQWVPFVLFFQALCFYIPHALWKSWEGGRIKALVFGLRMVGLTRYLKNDSLRIGKLNIPSMAEAEERVKDIRRTMIDRMRLNQSWGAHLVFAEVLNLINLLLQITWTNRFLGGQFLTLGPHALKNRWSDELSVLDLVFPKITKCKFHKFGDSGSIQMHDALCVMALNIMNEKIYIILWFWYAFLLIVTVLGLLWRILTLCFYRNVTFTRWSLYWAKPGQLDENELLAVIDKCNFSNWMFLFFLRSNLSEFLFKKVIYHLASEFPNPDHDNDVNAYREAPPTPAKNRYPELSGLDTIDSPLLHLRRNGSPSAGGAQGPSTSDMAKLPV.

The Cytoplasmic segment spans residues 1 to 23 (MLNTFSSVRQYLKFDLTRVVIDN). Residues 24–44 (IVFKLHYRWTFVILLVATLLI) form a helical membrane-spanning segment. Topologically, residues 45 to 58 (TSRQYIGEHIQCLS) are extracellular. A helical membrane pass occupies residues 59–79 (DGVVSPVINTFCFFTPTFTVV). At 80 to 112 (RDQNQTAYRPGSEPPGIGAFDPEKDTIKRHAYY) the chain is on the cytoplasmic side. Residues 113–133 (QWVPFVLFFQALCFYIPHALW) traverse the membrane as a helical segment. Residues 134 to 283 (KSWEGGRIKA…VMALNIMNEK (150 aa)) lie on the Extracellular side of the membrane. A helical membrane pass occupies residues 284 to 304 (IYIILWFWYAFLLIVTVLGLL). At 305–438 (WRILTLCFYR…STSDMAKLPV (134 aa)) the chain is on the cytoplasmic side. Disordered regions lie at residues 381–402 (NDVN…PELS) and 415–438 (RRNG…KLPV). Over residues 418 to 431 (GSPSAGGAQGPSTS) the composition is skewed to low complexity.

Belongs to the pannexin family. As to expression, expressed around gut lobes in embryonic stages 15-17.

It localises to the cell membrane. Its subcellular location is the cell junction. It is found in the gap junction. Structural components of the gap junctions. The sequence is that of Innexin inx7 (Inx7) from Drosophila melanogaster (Fruit fly).